A 256-amino-acid polypeptide reads, in one-letter code: Protein N-terminal and lysine N-methyltransferase EFM7 (256 aa).

Positions 1–26 (MSDTESLNDALGLFDEPEDFRPEKPK) are disordered. Residues tryptophan 64, 90-92 (GAA), aspartate 112, tryptophan 145, and serine 168 contribute to the S-adenosyl-L-methionine site.

It belongs to the class I-like SAM-binding methyltransferase superfamily. EFM7 family.

The protein resides in the cytoplasm. In terms of biological role, S-adenosyl-L-methionine-dependent protein methyltransferase that trimethylates the N-terminal glycine 'Gly-2' of elongation factor 1-alpha, before also catalyzing the mono- and dimethylation of 'Lys-3'. This Candida glabrata (strain ATCC 2001 / BCRC 20586 / JCM 3761 / NBRC 0622 / NRRL Y-65 / CBS 138) (Yeast) protein is Protein N-terminal and lysine N-methyltransferase EFM7.